We begin with the raw amino-acid sequence, 539 residues long: Phosphoenolpyruvate carboxykinase (ATP) (539 aa).

The substrate site is built by R64, Y206, and K212. ATP contacts are provided by residues K212, H231, and 247-255 (GLSGTGKTT). K212 and H231 together coordinate Mn(2+). D268 is a binding site for Mn(2+). ATP is bound by residues E296, R332, 448-449 (RI), and T454. R332 lines the substrate pocket.

This sequence belongs to the phosphoenolpyruvate carboxykinase (ATP) family. As to quaternary structure, monomer. It depends on Mn(2+) as a cofactor.

Its subcellular location is the cytoplasm. It carries out the reaction oxaloacetate + ATP = phosphoenolpyruvate + ADP + CO2. Its pathway is carbohydrate biosynthesis; gluconeogenesis. In terms of biological role, involved in the gluconeogenesis. Catalyzes the conversion of oxaloacetate (OAA) to phosphoenolpyruvate (PEP) through direct phosphoryl transfer between the nucleoside triphosphate and OAA. The polypeptide is Phosphoenolpyruvate carboxykinase (ATP) (Citrobacter koseri (strain ATCC BAA-895 / CDC 4225-83 / SGSC4696)).